The primary structure comprises 318 residues: Non-homologous end joining protein Ku (318 aa).

Residues 10-193 (AFGLVNVPVK…EVQIKPAELK (184 aa)) enclose the Ku domain. The interval 259–318 (SVKARKGGKSDSKDDSDSESDSKESKSDSKPAKKAPAKKAAAKKSTAKKAPAKKAAAKKS) is disordered. Residues 266-289 (GKSDSKDDSDSESDSKESKSDSKP) show a composition bias toward basic and acidic residues. The span at 290–318 (AKKAPAKKAAAKKSTAKKAPAKKAAAKKS) shows a compositional bias: basic residues.

This sequence belongs to the prokaryotic Ku family. Homodimer. Interacts with Sir2 and probably also with LigD; may form a trimeric complex during NHEJ.

In terms of biological role, with LigD forms a non-homologous end joining (NHEJ) repair enzyme which repairs blunt-end and 5'-overhang double strand breaks (DSB) with about 50% fidelity, and DSB with non-complementary 3' ends. Plays a partial role in NHEJ on 3'-overhang repair of complementary ends. NHEJ repairs DSB with blunt ends and 5' overhangs with a high level of nucleotide insertion/deletion, without a need for microhomology. This protein but not LigD also suppresses homologous recombination. Overexpression dramatically increases the efficiency of NHEJ with no effect on repair fidelity. The protein is Non-homologous end joining protein Ku of Mycolicibacterium smegmatis (strain ATCC 700084 / mc(2)155) (Mycobacterium smegmatis).